The following is a 563-amino-acid chain: Probable ganciclovir kinase (563 aa).

Residues 1-16 are compositionally biased toward polar residues; sequence MDNGVETPQGQKTQPI. Residues 1 to 33 form a disordered region; the sequence is MDNGVETPQGQKTQPINLPPDRKRLRKHDGLGK. ATP-binding positions include 202 to 210 and lysine 219; that span reads LGVGAYGKV. The Proton acceptor role is filled by aspartate 314.

This sequence belongs to the protein kinase superfamily. Tyr protein kinase family. HCMV ganciclovir subfamily.

In terms of biological role, phosphorylates the antiviral nucleoside analog ganciclovir. This is Probable ganciclovir kinase (U69) from Human herpesvirus 6B (strain Z29) (HHV-6 variant B).